A 202-amino-acid polypeptide reads, in one-letter code: Small ribosomal subunit protein uS4 (202 aa).

A disordered region spans residues 22–43; that stretch reads TRKSARRAYPPGQHGQNRKKRS. In terms of domain architecture, S4 RNA-binding spans 90 to 152; sequence MRLDNTVFRL…AQSRKLVEAN (63 aa).

It belongs to the universal ribosomal protein uS4 family. Part of the 30S ribosomal subunit. Contacts protein S5. The interaction surface between S4 and S5 is involved in control of translational fidelity.

In terms of biological role, one of the primary rRNA binding proteins, it binds directly to 16S rRNA where it nucleates assembly of the body of the 30S subunit. Functionally, with S5 and S12 plays an important role in translational accuracy. The protein is Small ribosomal subunit protein uS4 of Nostoc punctiforme (strain ATCC 29133 / PCC 73102).